A 451-amino-acid chain; its full sequence is Probable glycine dehydrogenase (decarboxylating) subunit 1 (451 aa).

Belongs to the GcvP family. N-terminal subunit subfamily. In terms of assembly, the glycine cleavage system is composed of four proteins: P, T, L and H. In this organism, the P 'protein' is a heterodimer of two subunits.

The enzyme catalyses N(6)-[(R)-lipoyl]-L-lysyl-[glycine-cleavage complex H protein] + glycine + H(+) = N(6)-[(R)-S(8)-aminomethyldihydrolipoyl]-L-lysyl-[glycine-cleavage complex H protein] + CO2. Its function is as follows. The glycine cleavage system catalyzes the degradation of glycine. The P protein binds the alpha-amino group of glycine through its pyridoxal phosphate cofactor; CO(2) is released and the remaining methylamine moiety is then transferred to the lipoamide cofactor of the H protein. This chain is Probable glycine dehydrogenase (decarboxylating) subunit 1, found in Thioalkalivibrio sulfidiphilus (strain HL-EbGR7).